We begin with the raw amino-acid sequence, 417 residues long: Serine hydroxymethyltransferase 2 (417 aa).

(6S)-5,6,7,8-tetrahydrofolate-binding positions include leucine 121 and 125–127 (GHL). N6-(pyridoxal phosphate)lysine is present on lysine 230. Position 355–357 (355–357 (SPF)) interacts with (6S)-5,6,7,8-tetrahydrofolate.

The protein belongs to the SHMT family. Homodimer. It depends on pyridoxal 5'-phosphate as a cofactor.

It localises to the cytoplasm. It catalyses the reaction (6R)-5,10-methylene-5,6,7,8-tetrahydrofolate + glycine + H2O = (6S)-5,6,7,8-tetrahydrofolate + L-serine. Its pathway is one-carbon metabolism; tetrahydrofolate interconversion. It functions in the pathway amino-acid biosynthesis; glycine biosynthesis; glycine from L-serine: step 1/1. Its function is as follows. Catalyzes the reversible interconversion of serine and glycine with tetrahydrofolate (THF) serving as the one-carbon carrier. This reaction serves as the major source of one-carbon groups required for the biosynthesis of purines, thymidylate, methionine, and other important biomolecules. Also exhibits THF-independent aldolase activity toward beta-hydroxyamino acids, producing glycine and aldehydes, via a retro-aldol mechanism. This Pseudomonas fluorescens (strain ATCC BAA-477 / NRRL B-23932 / Pf-5) protein is Serine hydroxymethyltransferase 2.